The primary structure comprises 457 residues: Bifunctional protein GlmU (457 aa).

Residues 1 to 232 (MNNLAAVILA…PAEVMGINDR (232 aa)) form a pyrophosphorylase region. UDP-N-acetyl-alpha-D-glucosamine is bound by residues 9-12 (LAAG), K23, Q75, and 80-81 (GT). Position 105 (D105) interacts with Mg(2+). Residues G142, E157, N172, and N230 each coordinate UDP-N-acetyl-alpha-D-glucosamine. N230 contributes to the Mg(2+) binding site. Residues 233 to 253 (AQLAEAGQLLRGRINKALMLD) are linker. Residues 254–457 (GTTLIDPQTT…NKEGWKLKKK (204 aa)) form an N-acetyltransferase region. R336 and K354 together coordinate UDP-N-acetyl-alpha-D-glucosamine. H366 serves as the catalytic Proton acceptor. Residues Y369 and N380 each coordinate UDP-N-acetyl-alpha-D-glucosamine. Residues 389 to 390 (NY), S408, A426, and R443 each bind acetyl-CoA.

It in the N-terminal section; belongs to the N-acetylglucosamine-1-phosphate uridyltransferase family. This sequence in the C-terminal section; belongs to the transferase hexapeptide repeat family. In terms of assembly, homotrimer. Requires Mg(2+) as cofactor.

It localises to the cytoplasm. The catalysed reaction is alpha-D-glucosamine 1-phosphate + acetyl-CoA = N-acetyl-alpha-D-glucosamine 1-phosphate + CoA + H(+). The enzyme catalyses N-acetyl-alpha-D-glucosamine 1-phosphate + UTP + H(+) = UDP-N-acetyl-alpha-D-glucosamine + diphosphate. The protein operates within nucleotide-sugar biosynthesis; UDP-N-acetyl-alpha-D-glucosamine biosynthesis; N-acetyl-alpha-D-glucosamine 1-phosphate from alpha-D-glucosamine 6-phosphate (route II): step 2/2. Its pathway is nucleotide-sugar biosynthesis; UDP-N-acetyl-alpha-D-glucosamine biosynthesis; UDP-N-acetyl-alpha-D-glucosamine from N-acetyl-alpha-D-glucosamine 1-phosphate: step 1/1. It functions in the pathway bacterial outer membrane biogenesis; LPS lipid A biosynthesis. In terms of biological role, catalyzes the last two sequential reactions in the de novo biosynthetic pathway for UDP-N-acetylglucosamine (UDP-GlcNAc). The C-terminal domain catalyzes the transfer of acetyl group from acetyl coenzyme A to glucosamine-1-phosphate (GlcN-1-P) to produce N-acetylglucosamine-1-phosphate (GlcNAc-1-P), which is converted into UDP-GlcNAc by the transfer of uridine 5-monophosphate (from uridine 5-triphosphate), a reaction catalyzed by the N-terminal domain. The protein is Bifunctional protein GlmU of Geotalea uraniireducens (strain Rf4) (Geobacter uraniireducens).